Consider the following 469-residue polypeptide: tRNA modification GTPase MnmE (469 aa).

(6S)-5-formyl-5,6,7,8-tetrahydrofolate-binding residues include Arg-26, Glu-88, and Arg-127. In terms of domain architecture, TrmE-type G spans 222–390 (GLKVAIVGRP…LEDAILHLVQ (169 aa)). Asn-232 is a K(+) binding site. Residues 232 to 237 (NVGKSS), 251 to 257 (TDLPGTT), 276 to 279 (DTAG), and 344 to 347 (NKAD) contribute to the GTP site. A Mg(2+)-binding site is contributed by Ser-236. 3 residues coordinate K(+): Thr-251, Leu-253, and Thr-256. Thr-257 contacts Mg(2+). Lys-469 contributes to the (6S)-5-formyl-5,6,7,8-tetrahydrofolate binding site.

It belongs to the TRAFAC class TrmE-Era-EngA-EngB-Septin-like GTPase superfamily. TrmE GTPase family. As to quaternary structure, homodimer. Heterotetramer of two MnmE and two MnmG subunits. K(+) is required as a cofactor.

Its subcellular location is the cytoplasm. Functionally, exhibits a very high intrinsic GTPase hydrolysis rate. Involved in the addition of a carboxymethylaminomethyl (cmnm) group at the wobble position (U34) of certain tRNAs, forming tRNA-cmnm(5)s(2)U34. The sequence is that of tRNA modification GTPase MnmE from Synechococcus elongatus.